A 1018-amino-acid chain; its full sequence is Cell wall protein 1 (1018 aa).

Residues 1–17 (MLPSIVISIVLASFVSA) form the signal peptide. A CFEM 1 domain is found at 32 to 143 (NPYTIYPSVA…SSLSAAATAV (112 aa)). 4 disulfide bridges follow: Cys60–Cys100, Cys64–Cys95, Cys74–Cys81, and Cys83–Cys116. Asp78 is a heme binding site. The disordered stretch occupies residues 147–227 (SEQPVETSSE…STPEDNPYTI (81 aa)). A compositionally biased stretch (polar residues) spans 148–164 (EQPVETSSEPAGSSQSV). Over residues 165-221 (ESSQPAETSSSEPAETSSSEPAETSSETSSEQPASSEPAETSSEESSTITSAPSTPE) the composition is skewed to low complexity. 2 consecutive CFEM domains span residues 223–334 (NPYT…ATAV) and 393–504 (SSSS…ATAV). 4 cysteine pairs are disulfide-bonded: Cys251–Cys291, Cys255–Cys286, Cys265–Cys272, and Cys274–Cys307. Residue Asp269 coordinates heme. The disordered stretch occupies residues 338 to 396 (SEQSVETSSESAESSQSVESSQPAETSSEQPSETSSETSSQQLSSITSAPDSSATSSSS). 4 disulfides stabilise this stretch: Cys421–Cys461, Cys425–Cys456, Cys435–Cys442, and Cys444–Cys477. Asp439 lines the heme pocket. Residues 507 to 557 (SDSASETASQEPSETSSEQPSETASQQPAETSSEESSTITSAPSTPEDNPY) are disordered. Low complexity predominate over residues 509–553 (SASETASQEPSETSSEQPSETASQQPAETSSEESSTITSAPSTPE). The CFEM 4 domain maps to 555–666 (NPYTIYPSVA…SSLNAAATAV (112 aa)). 4 disulfide bridges follow: Cys583-Cys623, Cys587-Cys618, Cys597-Cys604, and Cys606-Cys639. Asp601 provides a ligand contact to heme. Residues 677–785 (SASESASQVP…STSTKSDAAS (109 aa)) are disordered. The segment covering 690 to 766 (SAASSQSANN…AISESVAPSS (77 aa)) has biased composition (low complexity). Asn698, Asn708, Asn718, Asn729, Asn743, Asn753, Asn769, Asn798, and Asn965 each carry an N-linked (GlcNAc...) asparagine glycan. A compositionally biased stretch (polar residues) spans 767–785 (YGNSTIAQPSTSTKSDAAS). Ser989 carries the GPI-anchor amidated serine lipid modification. Residues 990–1018 (VAIANMANTKFASTMSLLVASFVFVGLFI) constitute a propeptide, removed in mature form.

The protein belongs to the RBT5 family. The GPI-anchor is attached to the protein in the endoplasmic reticulum and serves to target the protein to the cell surface. There, the glucosamine-inositol phospholipid moiety is cleaved off and the GPI-modified mannoprotein is covalently attached via its lipidless GPI glycan remnant to the 1,6-beta-glucan of the outer cell wall layer.

Its subcellular location is the secreted. The protein resides in the cell wall. It is found in the membrane. Functionally, heme-binding protein involved in heme-iron utilization. The ability to acquire iron from host tissues is a major virulence factor of pathogenic microorganisms. Required for biofilm formation. This Candida albicans (strain SC5314 / ATCC MYA-2876) (Yeast) protein is Cell wall protein 1 (CSA1).